We begin with the raw amino-acid sequence, 134 residues long: Protein NrdI (134 aa).

This sequence belongs to the NrdI family.

Its function is as follows. Probably involved in ribonucleotide reductase function. In Yersinia enterocolitica serotype O:8 / biotype 1B (strain NCTC 13174 / 8081), this protein is Protein NrdI.